We begin with the raw amino-acid sequence, 229 residues long: Putative N-acetylmannosamine-6-phosphate 2-epimerase (229 aa).

It belongs to the NanE family.

The catalysed reaction is an N-acyl-D-glucosamine 6-phosphate = an N-acyl-D-mannosamine 6-phosphate. Its pathway is amino-sugar metabolism; N-acetylneuraminate degradation; D-fructose 6-phosphate from N-acetylneuraminate: step 3/5. Its function is as follows. Converts N-acetylmannosamine-6-phosphate (ManNAc-6-P) to N-acetylglucosamine-6-phosphate (GlcNAc-6-P). This Escherichia coli O139:H28 (strain E24377A / ETEC) protein is Putative N-acetylmannosamine-6-phosphate 2-epimerase.